Reading from the N-terminus, the 268-residue chain is Protein DEEPER ROOTING 1 (268 aa).

The span at 11-21 (LNGKQGNKKPN) shows a compositional bias: low complexity. A disordered region spans residues 11–39 (LNGKQGNKKPNTVPITTHPAKQEPREEFS). A compositionally biased stretch (basic and acidic residues) spans 30–39 (AKQEPREEFS). An IGT motif motif is present at residues 44-50 (GLLAIGT). A disordered region spans residues 220–246 (SRAASMKKYLEDRQIPTKKESNTEDDT). Residues 227-246 (KYLEDRQIPTKKESNTEDDT) are compositionally biased toward basic and acidic residues.

This sequence belongs to the LAZY family. In terms of tissue distribution, expressed in roots.

In terms of biological role, involved in the development of the root system architecture by influencing lateral root angles and primary root length. The polypeptide is Protein DEEPER ROOTING 1 (Prunus persica (Peach)).